Here is a 387-residue protein sequence, read N- to C-terminus: Phosphoglycerate kinase (387 aa).

Substrate is bound by residues 21–23, Arg36, 59–62, Arg113, and Arg146; these read DLN and HLGR. Residues Lys197, Glu314, and 340 to 343 each bind ATP; that span reads GGDT.

The protein belongs to the phosphoglycerate kinase family. As to quaternary structure, monomer.

The protein localises to the cytoplasm. The catalysed reaction is (2R)-3-phosphoglycerate + ATP = (2R)-3-phospho-glyceroyl phosphate + ADP. Its pathway is carbohydrate degradation; glycolysis; pyruvate from D-glyceraldehyde 3-phosphate: step 2/5. This Pseudomonas fluorescens (strain ATCC BAA-477 / NRRL B-23932 / Pf-5) protein is Phosphoglycerate kinase.